Here is an 81-residue protein sequence, read N- to C-terminus: Small ribosomal subunit protein bS16 (81 aa).

The protein belongs to the bacterial ribosomal protein bS16 family.

The polypeptide is Small ribosomal subunit protein bS16 (Clostridium botulinum (strain Eklund 17B / Type B)).